We begin with the raw amino-acid sequence, 575 residues long: Urease subunit alpha (575 aa).

The region spanning 138–575 (GAVDCHVHLI…LPMTQRYFLF (438 aa)) is the Urease domain. Positions 143, 145, and 226 each coordinate Ni(2+). Lys226 is subject to N6-carboxylysine. His228 provides a ligand contact to substrate. The Ni(2+) site is built by His255 and His281. Catalysis depends on His329, which acts as the Proton donor. Asp369 is a Ni(2+) binding site.

The protein belongs to the metallo-dependent hydrolases superfamily. Urease alpha subunit family. As to quaternary structure, heterotrimer of UreA (gamma), UreB (beta) and UreC (alpha) subunits. Three heterotrimers associate to form the active enzyme. It depends on Ni cation as a cofactor. Post-translationally, carboxylation allows a single lysine to coordinate two nickel ions.

It is found in the cytoplasm. The enzyme catalyses urea + 2 H2O + H(+) = hydrogencarbonate + 2 NH4(+). The protein operates within nitrogen metabolism; urea degradation; CO(2) and NH(3) from urea (urease route): step 1/1. This Frankia casuarinae (strain DSM 45818 / CECT 9043 / HFP020203 / CcI3) protein is Urease subunit alpha.